The sequence spans 204 residues: Cytochrome b6 (204 aa).

The helical transmembrane segment at 23 to 43 (YCLGGITLTSFLVQVATGSAM) threads the bilayer. Cys24 is a heme c binding site. His75 and His89 together coordinate heme b. A run of 3 helical transmembrane segments spans residues 81–101 (MMVLMMILHVFRVYLTGGFKK), 107–127 (WVTGVILGVLTVSFGVTGYSL), and 136–157 (AVKIVTGVPEAIPVIGSPLVEL). Residues His176 and His191 each coordinate heme b. A helical transmembrane segment spans residues 177–197 (TFILPLLTAVFMPMHFLMIRK).

This sequence belongs to the cytochrome b family. PetB subfamily. In terms of assembly, the 4 large subunits of the cytochrome b6-f complex are cytochrome b6, subunit IV (17 kDa polypeptide, PetD), cytochrome f and the Rieske protein, while the 4 small subunits are PetG, PetL, PetM and PetN. The complex functions as a dimer. The cofactor is heme b. Requires heme c as cofactor.

It is found in the plastid. The protein localises to the chloroplast thylakoid membrane. Component of the cytochrome b6-f complex, which mediates electron transfer between photosystem II (PSII) and photosystem I (PSI), cyclic electron flow around PSI, and state transitions. This chain is Cytochrome b6, found in Picea abies (Norway spruce).